A 21-amino-acid chain; its full sequence is Apolipophorin 2 (21 aa).

In terms of tissue distribution, expressed in hemolymph.

It localises to the secreted. Functionally, constitutes the major component of lipophorin, which mediates transport for various types of lipids in hemolymph. Acts by forming lipoprotein particles that bind lipoproteins and lipids. This Galleria mellonella (Greater wax moth) protein is Apolipophorin 2.